Consider the following 201-residue polypeptide: Small ribosomal subunit protein uS4c (201 aa).

The tract at residues 15 to 43 is disordered; it reads LGALPGLTSKRPSPGSDLRNQSRSGKRSQ. Residues 89–150 enclose the S4 RNA-binding domain; sequence MRLDNILFRL…EQRSRALIQK (62 aa).

It belongs to the universal ribosomal protein uS4 family. As to quaternary structure, part of the 30S ribosomal subunit. Contacts protein S5. The interaction surface between S4 and S5 is involved in control of translational fidelity.

The protein localises to the plastid. It is found in the chloroplast. In terms of biological role, one of the primary rRNA binding proteins, it binds directly to 16S rRNA where it nucleates assembly of the body of the 30S subunit. With S5 and S12 plays an important role in translational accuracy. In Ceratophyllum demersum (Rigid hornwort), this protein is Small ribosomal subunit protein uS4c (rps4).